A 462-amino-acid chain; its full sequence is Malonyl-coenzyme:anthocyanin 5-O-glucoside-6'''-O-malonyltransferase (462 aa).

Active-site proton acceptor residues include H167 and D390.

It belongs to the plant acyltransferase family. Detected in petals and sepals, and at lower levels in bracts and red stems.

The catalysed reaction is pelargonidin 3-O-(6-O-[(E)-caffeoyl]-beta-D-glucoside) 5-O-beta-D-glucoside + malonyl-CoA = 4'''-demalonylsalvianin + CoA. The protein operates within pigment biosynthesis; anthocyanin biosynthesis. With respect to regulation, completely inhibited by 10 mM p-coumaric acid, this inhibition is rapid, reversible and non-competitive. Completely inhibited by 0.1 mM Cu(2+), 0.1 mM Hg(2+) and 10 mM caffeic acid. Partially inhibited by 5 mM N-ethylmaleimide, 1 mM diethylpyrocarbonate and 1 mM acetyl-CoA. In terms of biological role, catalyzes the transfer of a malonyl group from malonyl-CoA to the 6'''-hydroxyl group of the 5-glucosyl moiety of anthocyanins. Active towards bisdemalonylsalvianin (pelargonidin 3-O-(6-caffeoyl-beta-D-glucoside) 5-O-beta-D-glucoside) and shisonin, but not towards nodemalonylsalvianin, salvianin, pelargonidin 3,5-diglucoside and delphinidin 3,5-diglucoside. The sequence is that of Malonyl-coenzyme:anthocyanin 5-O-glucoside-6'''-O-malonyltransferase from Salvia splendens (Scarlet sage).